Reading from the N-terminus, the 893-residue chain is Translation initiation factor IF-2 (893 aa).

Disordered stretches follow at residues 51–203 and 216–299; these read KEHG…AEAE and EENE…TSMQ. 3 stretches are compositionally biased toward basic and acidic residues: residues 102–203, 216–238, and 245–261; these read ALEE…AEAE, EENE…DADY, and HARE…EQQP. In terms of domain architecture, tr-type G spans 392–561; sequence GRAPVVTIMG…LLQSEVLELT (170 aa). The interval 401-408 is G1; it reads GHVDHGKT. 401 to 408 is a GTP binding site; sequence GHVDHGKT. Residues 426–430 form a G2 region; the sequence is GITQH. Positions 447–450 are G3; the sequence is DTPG. GTP contacts are provided by residues 447 to 451 and 501 to 504; these read DTPGH and NKID. A G4 region spans residues 501-504; sequence NKID. The G5 stretch occupies residues 537 to 539; the sequence is SAK.

This sequence belongs to the TRAFAC class translation factor GTPase superfamily. Classic translation factor GTPase family. IF-2 subfamily.

Its subcellular location is the cytoplasm. In terms of biological role, one of the essential components for the initiation of protein synthesis. Protects formylmethionyl-tRNA from spontaneous hydrolysis and promotes its binding to the 30S ribosomal subunits. Also involved in the hydrolysis of GTP during the formation of the 70S ribosomal complex. The sequence is that of Translation initiation factor IF-2 from Aliivibrio fischeri (strain ATCC 700601 / ES114) (Vibrio fischeri).